The chain runs to 252 residues: Vacuolar-sorting protein dot2 (252 aa).

It belongs to the SNF8 family. Component of the endosomal sorting complex required for transport II (ESCRT-II).

The protein localises to the cytoplasm. Its subcellular location is the nucleus. It localises to the endosome membrane. In terms of biological role, component of the endosomal sorting complex required for transport II (ESCRT-II), which is required for multivesicular body (MVB) formation and sorting of endosomal cargo proteins into MVBs. The MVB pathway mediates delivery of transmembrane proteins into the lumen of the lysosome for degradation. The ESCRT-II complex is probably involved in the recruitment of the ESCRT-III complex. Negatively regulates meiotic spindle pole body maturation via indirect regulation of the pcp1 gene. Required for efficient entry into pre-meiotic S phase. The chain is Vacuolar-sorting protein dot2 (dot2) from Schizosaccharomyces pombe (strain 972 / ATCC 24843) (Fission yeast).